Here is a 155-residue protein sequence, read N- to C-terminus: Ribosomal RNA large subunit methyltransferase H (155 aa).

Residues L73, G104, and 123–128 each bind S-adenosyl-L-methionine; that span reads LSPLTL.

The protein belongs to the RNA methyltransferase RlmH family. As to quaternary structure, homodimer.

The protein localises to the cytoplasm. It catalyses the reaction pseudouridine(1915) in 23S rRNA + S-adenosyl-L-methionine = N(3)-methylpseudouridine(1915) in 23S rRNA + S-adenosyl-L-homocysteine + H(+). Its function is as follows. Specifically methylates the pseudouridine at position 1915 (m3Psi1915) in 23S rRNA. In Pseudomonas putida (strain GB-1), this protein is Ribosomal RNA large subunit methyltransferase H.